The following is a 577-amino-acid chain: Urease subunit alpha (577 aa).

Residues Gly-136–Phe-577 enclose the Urease domain. Ni(2+) contacts are provided by His-141, His-143, and Lys-224. N6-carboxylysine is present on Lys-224. His-226 contacts substrate. Residues His-253 and His-279 each contribute to the Ni(2+) site. His-327 acts as the Proton donor in catalysis. Asp-367 contributes to the Ni(2+) binding site.

This sequence belongs to the metallo-dependent hydrolases superfamily. Urease alpha subunit family. In terms of assembly, heterotrimer of UreA (gamma), UreB (beta) and UreC (alpha) subunits. Three heterotrimers associate to form the active enzyme. Requires Ni cation as cofactor. In terms of processing, carboxylation allows a single lysine to coordinate two nickel ions.

The protein resides in the cytoplasm. The enzyme catalyses urea + 2 H2O + H(+) = hydrogencarbonate + 2 NH4(+). The protein operates within nitrogen metabolism; urea degradation; CO(2) and NH(3) from urea (urease route): step 1/1. This is Urease subunit alpha from Mycobacterium marinum (strain ATCC BAA-535 / M).